The following is a 517-amino-acid chain: Tyrosine-protein kinase Src42A (517 aa).

The segment at 1-47 (MGNCLTTQKGEPDKPADRIKLDDPPTIGVGVGVPQIPMPSHAGQPPE) is disordered. Over residues 10-23 (GEPDKPADRIKLDD) the composition is skewed to basic and acidic residues. Positions 63–124 (ANAKIFVALY…PSNYVAKLKS (62 aa)) constitute an SH3 domain. The SH2 domain maps to 130–222 (WYFRKIKRIE…GLCVNLCKPC (93 aa)). Residues 248-504 (LKFVRKLGSG…TLQWKLEDFY (257 aa)) enclose the Protein kinase domain. Residues 254-262 (LGSGQFGDV) and Lys-276 contribute to the ATP site. Residue Asp-370 is the Proton acceptor of the active site.

Belongs to the protein kinase superfamily. Tyr protein kinase family. SRC subfamily. Ubiquitous in early embryos, in stages 13-16 expression is seen in visceral mesoderm, hindgut, brain, anal pads and ventral ganglions. In larvae, expression is in CNS, wing disk, leg disk and photoreceptor precursors in the eye-antenna disks posterior to the morphogenetic furrow.

It catalyses the reaction L-tyrosyl-[protein] + ATP = O-phospho-L-tyrosyl-[protein] + ADP + H(+). In terms of biological role, required directly or indirectly for the phosphorylation of drpr which is necessary for the interaction of drpr with shark and subsequent glial phagocytic activity. Together with drpr and shark, promotes the migration of macrophages to sites of wounding as part of a signaling cascade where Src42A detects production of hydrogen peroxide at wound sites which triggers phosphorylation of drpr and subsequent recruitment and activation of shark. Essential for correct eye morphogenesis (ommatidial R7 neuron formation) which requires the Ras1/MAPK signal transduction pathway. May be involved in the regulation of cytoskeleton organization and cell-cell contacts in developing ommatidia. Involved in phosphorylation of Dscam1, a cell surface receptor involved in targeting of growing axons during eye morphogenesis, and its interaction partner the SH2/SH3 adapter protein dock/dreadlocks. During embryogenesis, involved in regulation of dorsal closure where it may have a role in activating the JNK pathway in leading edge cells during this process. This Drosophila melanogaster (Fruit fly) protein is Tyrosine-protein kinase Src42A.